A 135-amino-acid polypeptide reads, in one-letter code: ATP synthase epsilon chain (135 aa).

Belongs to the ATPase epsilon chain family. As to quaternary structure, F-type ATPases have 2 components, CF(1) - the catalytic core - and CF(0) - the membrane proton channel. CF(1) has five subunits: alpha(3), beta(3), gamma(1), delta(1), epsilon(1). CF(0) has three main subunits: a, b and c.

The protein localises to the cell inner membrane. Produces ATP from ADP in the presence of a proton gradient across the membrane. This chain is ATP synthase epsilon chain, found in Brucella abortus (strain S19).